The following is a 404-amino-acid chain: Cysteine desulfurase IscS (404 aa).

Pyridoxal 5'-phosphate is bound by residues 75–76 (AT), N155, Q183, and 203–205 (SAH). K206 is subject to N6-(pyridoxal phosphate)lysine. T243 is a binding site for pyridoxal 5'-phosphate. C328 (cysteine persulfide intermediate) is an active-site residue. C328 provides a ligand contact to [2Fe-2S] cluster.

Belongs to the class-V pyridoxal-phosphate-dependent aminotransferase family. NifS/IscS subfamily. In terms of assembly, homodimer. Forms a heterotetramer with IscU, interacts with other sulfur acceptors. The cofactor is pyridoxal 5'-phosphate.

The protein localises to the cytoplasm. The enzyme catalyses (sulfur carrier)-H + L-cysteine = (sulfur carrier)-SH + L-alanine. Its pathway is cofactor biosynthesis; iron-sulfur cluster biosynthesis. Its function is as follows. Master enzyme that delivers sulfur to a number of partners involved in Fe-S cluster assembly, tRNA modification or cofactor biosynthesis. Catalyzes the removal of elemental sulfur atoms from cysteine to produce alanine. Functions as a sulfur delivery protein for Fe-S cluster synthesis onto IscU, an Fe-S scaffold assembly protein, as well as other S acceptor proteins. The protein is Cysteine desulfurase IscS of Pseudomonas syringae pv. syringae (strain B728a).